The following is a 154-amino-acid chain: 6,7-dimethyl-8-ribityllumazine synthase (154 aa).

5-amino-6-(D-ribitylamino)uracil-binding positions include phenylalanine 22, 56 to 58, and 80 to 82; these read AFE and AVI. 85–86 lines the (2S)-2-hydroxy-3-oxobutyl phosphate pocket; it reads AT. The Proton donor role is filled by histidine 88. 5-amino-6-(D-ribitylamino)uracil is bound at residue phenylalanine 113. A (2S)-2-hydroxy-3-oxobutyl phosphate-binding site is contributed by arginine 127.

It belongs to the DMRL synthase family.

The enzyme catalyses (2S)-2-hydroxy-3-oxobutyl phosphate + 5-amino-6-(D-ribitylamino)uracil = 6,7-dimethyl-8-(1-D-ribityl)lumazine + phosphate + 2 H2O + H(+). It functions in the pathway cofactor biosynthesis; riboflavin biosynthesis; riboflavin from 2-hydroxy-3-oxobutyl phosphate and 5-amino-6-(D-ribitylamino)uracil: step 1/2. Catalyzes the formation of 6,7-dimethyl-8-ribityllumazine by condensation of 5-amino-6-(D-ribitylamino)uracil with 3,4-dihydroxy-2-butanone 4-phosphate. This is the penultimate step in the biosynthesis of riboflavin. The protein is 6,7-dimethyl-8-ribityllumazine synthase of Clostridium botulinum (strain 657 / Type Ba4).